The primary structure comprises 375 residues: 4,4'-diaponeurosporenoate glycosyltransferase (375 aa).

Transmembrane regions (helical) follow at residues 3–23 (WLSR…ALIF), 164–184 (FYEG…NVFS), 277–297 (IMAA…GLCL), and 330–350 (FSNL…KIFI).

It belongs to the glycosyltransferase 2 family. CrtQ subfamily.

The protein resides in the cell membrane. It functions in the pathway carotenoid biosynthesis; staphyloxanthin biosynthesis; staphyloxanthin from farnesyl diphosphate: step 4/5. In terms of biological role, catalyzes the glycosylation of 4,4'-diaponeurosporenoate, i.e. the esterification of glucose at the C1'' position with the carboxyl group of 4,4'-diaponeurosporenic acid, to form glycosyl-4,4'-diaponeurosporenoate. This is a step in the biosynthesis of staphyloxanthin, an orange pigment present in most staphylococci strains. This chain is 4,4'-diaponeurosporenoate glycosyltransferase (crtQ), found in Staphylococcus aureus (strain bovine RF122 / ET3-1).